A 1072-amino-acid polypeptide reads, in one-letter code: MPKRLDINTILVIGSGPIVIGQAAEFDYSGTQACQSLKEEGYKVILVNSNPATIMTDTATADKVYIEPLTLEFVSRIIRKERPDAILPTLGGQTGLNMAVELAKSGVLEECGVEILGTKLSAIEQAEDRDLFRTLMQDLNEPTPPSEIIHNLDEAYSFVNEIGYPVIVRPAFTLGGTGGGICHNEEELIEIVTSGLKHSPVTQCLLEKSIAGCKEIEYEVMRDSNDNAIVVCNMENIDPVGVHTGDSIVVAPSQTLSDREYQMLRNTSLRIIRALGIEGGCNVQLALDPYSFQYYVIEVNPRVSRSSALASKATGYPIAKLAAKIAVGLTLDEIVNPVTQKTYACFEPALDYVVSKIPRWPFDKFESANRTLGTQMKATGEVMSIGRNLEESLLKAVRSLELGIYHLELDHLKELDKETMKKRIIKADDERLFIVAEAIRQGVTKEEINEWCEMDFFFLQKVENIVNMEREVKANVGNMEVLQTAKEMGFSDHYIAAAWNKTEREIYDMRKENNMTPVFKMVDTCAAEFESATPYYYSTYAEENESIVTDRKSVVVLGSGPIRIGQGVEFDYATVHSVWAIKEAGYEAIIINNNPETVSTDFSISDKLYFEPLTIEDVMHIIDLEKPEGVIVQFGGQTAINLAAKLEEHGVKILGTSLEDLDRAEDRDKFEAALTKLGIPQPVGKTATTVEQAVAIAEEIGYPVLVRPSYVLGGRAMEIVYRQEELLHYMKNAVKVHADHPVLIDRYMVGKEIEVDAISDGENVFIPGIMEHIERAGVHSGDSIGVYPPQSLSEKLKEQIIEHTIALGKGLNIVGLLNIQFVVFENQVYVIEVNPRASRTVPFLSKITGVPMANVATKVILGQDLVEQGYGTGYHPEEKEVYVKAPVFSFAKLRSVDTTLGPEMKSTGEVMGKDLTLEKALYKGLVASGINIPTHGSVIITVADKDKEEAMEIAKRFHEIGYNLLATAGTAQSLTEQNIPVQVVNKIDSEDYNLLDIIRQGKAQFVINTLTKGKQPARDGFRIRRESVENGVACLTSLDTTRAILRVLESMTFSAHSMKEITQTKRHEVVHA.

Positions 1-401 (MPKRLDINTI…SLLKAVRSLE (401 aa)) are carboxyphosphate synthetic domain. Residues arginine 129, arginine 169, glycine 175, glycine 176, lysine 208, isoleucine 210, glutamate 215, glycine 241, valine 242, histidine 243, glutamine 284, and glutamate 298 each coordinate ATP. One can recognise an ATP-grasp 1 domain in the interval 133–327 (RTLMQDLNEP…IAKLAAKIAV (195 aa)). Glutamine 284, glutamate 298, and asparagine 300 together coordinate Mg(2+). Residues glutamine 284, glutamate 298, and asparagine 300 each contribute to the Mn(2+) site. Residues 402-546 (LGIYHLELDH…YSTYAEENES (145 aa)) form an oligomerization domain region. A carbamoyl phosphate synthetic domain region spans residues 547–929 (IVTDRKSVVV…ALYKGLVASG (383 aa)). The ATP-grasp 2 domain occupies 671–861 (EAALTKLGIP…MANVATKVIL (191 aa)). Residues arginine 707, arginine 746, glutamate 752, glycine 777, valine 778, histidine 779, serine 780, glutamine 820, and glutamate 832 each contribute to the ATP site. The Mg(2+) site is built by glutamine 820, glutamate 832, and asparagine 834. The Mn(2+) site is built by glutamine 820, glutamate 832, and asparagine 834. An MGS-like domain is found at 930-1072 (INIPTHGSVI…QTKRHEVVHA (143 aa)). Residues 930-1072 (INIPTHGSVI…QTKRHEVVHA (143 aa)) form an allosteric domain region.

The protein belongs to the CarB family. Composed of two chains; the small (or glutamine) chain promotes the hydrolysis of glutamine to ammonia, which is used by the large (or ammonia) chain to synthesize carbamoyl phosphate. Tetramer of heterodimers (alpha,beta)4. The cofactor is Mg(2+). It depends on Mn(2+) as a cofactor.

It carries out the reaction hydrogencarbonate + L-glutamine + 2 ATP + H2O = carbamoyl phosphate + L-glutamate + 2 ADP + phosphate + 2 H(+). The catalysed reaction is hydrogencarbonate + NH4(+) + 2 ATP = carbamoyl phosphate + 2 ADP + phosphate + 2 H(+). It participates in amino-acid biosynthesis; L-arginine biosynthesis; carbamoyl phosphate from bicarbonate: step 1/1. The protein operates within pyrimidine metabolism; UMP biosynthesis via de novo pathway; (S)-dihydroorotate from bicarbonate: step 1/3. Its function is as follows. Large subunit of the glutamine-dependent carbamoyl phosphate synthetase (CPSase). CPSase catalyzes the formation of carbamoyl phosphate from the ammonia moiety of glutamine, carbonate, and phosphate donated by ATP, constituting the first step of 2 biosynthetic pathways, one leading to arginine and/or urea and the other to pyrimidine nucleotides. The large subunit (synthetase) binds the substrates ammonia (free or transferred from glutamine from the small subunit), hydrogencarbonate and ATP and carries out an ATP-coupled ligase reaction, activating hydrogencarbonate by forming carboxy phosphate which reacts with ammonia to form carbamoyl phosphate. This chain is Carbamoyl phosphate synthase large chain, found in Bacillus cereus (strain ATCC 10987 / NRS 248).